The following is a 251-amino-acid chain: Regulator of G-protein signaling 7-binding protein B (251 aa).

The segment at 1-43 (MCSAPNGRKNRPRSAANIFQIGKSSVRDPERRESTESARRAQR) is disordered. Residues 25–43 (SVRDPERRESTESARRAQR) are compositionally biased toward basic and acidic residues. Residues cysteine 246 and cysteine 247 are each lipidated (S-palmitoyl cysteine).

The protein belongs to the RGS7BP/RGS9BP family. Palmitoylated. Undergoes rapid palmitoylation turnover. Palmitoylation regulates the cell membrane and nuclear shuttling and the regulation of GPCR signaling. Upon depalmitoylation, it is targeted from the plasma membrane into the nucleus. GPCR signaling inhibits depalmitoylation and promotes localization to the plasma membrane.

Its subcellular location is the nucleus. The protein localises to the cytoplasm. It is found in the cell membrane. In terms of biological role, regulator of G protein-coupled receptor (GPCR) signaling. Regulatory subunit of the R7-Gbeta5 complexes that acts by controlling the subcellular location of the R7-Gbeta5 complexes. When palmitoylated, it targets the R7-Gbeta5 complexes to the plasma membrane, leading to inhibit G protein alpha subunits. When it is unpalmitoylated, the R7-Gbeta5 complexes undergo a nuclear/cytoplasmic shuttling. The protein is Regulator of G-protein signaling 7-binding protein B (rgs7bpb) of Danio rerio (Zebrafish).